The sequence spans 904 residues: Dual specificity tyrosine-phosphorylation-regulated kinase mbk-1 (904 aa).

Disordered stretches follow at residues 1–151 (MNSG…MPPE), 250–272 (TVGR…ASSS), and 285–345 (AVPN…YNNG). Residues 9–23 (NLQAWGQQPSSSYSN) show a composition bias toward polar residues. Residues 24–35 (TQQQHGQITGQI) show a composition bias toward low complexity. A compositionally biased stretch (basic and acidic residues) spans 59–75 (ELEKSKKIAEQPTEHPQ). Low complexity predominate over residues 112 to 123 (NNSNSQNFFPQQ). Positions 286–297 (VPNTSSSGNQPH) are enriched in polar residues. Positions 367–690 (ILSDTPVGKG…TLFPVSHTAY (324 aa)) constitute a Protein kinase domain. ATP-binding positions include 373–381 (VGKGSFGQV) and K396. The active-site Proton acceptor is the D495. 2 disordered regions span residues 717-830 (YRPV…DQAE) and 881-904 (MSHG…NNKL). A compositionally biased stretch (polar residues) spans 721-733 (PTSSHPISVTSSF). Positions 749-820 (SQQNYHNPNY…VQQHSSSSSR (72 aa)) are enriched in low complexity. Over residues 881–890 (MSHGNVNAGS) the composition is skewed to polar residues. Positions 892–904 (RDMEKHDYPNNKL) are enriched in basic and acidic residues.

It belongs to the protein kinase superfamily. CMGC Ser/Thr protein kinase family. MNB/DYRK subfamily. It depends on Mg(2+) as a cofactor.

It is found in the nucleus. The enzyme catalyses L-seryl-[protein] + ATP = O-phospho-L-seryl-[protein] + ADP + H(+). It catalyses the reaction L-threonyl-[protein] + ATP = O-phospho-L-threonyl-[protein] + ADP + H(+). It carries out the reaction L-tyrosyl-[protein] + ATP = O-phospho-L-tyrosyl-[protein] + ADP + H(+). Functionally, possible role in the function of olfactory neurons. The sequence is that of Dual specificity tyrosine-phosphorylation-regulated kinase mbk-1 from Caenorhabditis briggsae.